A 526-amino-acid polypeptide reads, in one-letter code: Fusicoccadiene 8-ol C-16-hydroxylase (526 aa).

A helical membrane pass occupies residues 34-56 (AFVGFSVLGLTLLFSKLFYNAYL). N-linked (GlcNAc...) asparagine glycosylation is found at Asn-309, Asn-418, and Asn-434. Residue Cys-470 coordinates heme.

It belongs to the cytochrome P450 family. It depends on heme as a cofactor.

It is found in the membrane. It participates in mycotoxin biosynthesis. In terms of biological role, cytochrome P450 monooxygenase; part of the 2 gene clusters that mediate the biosynthesis of fusicoccins, diterpene glucosides that display phytohormone-like activity and function as potent activators of plasma membrane H(+)-ATPases in plants by modifying 14-3-3 proteins and cause the plant disease constriction canker. The first step in the pathway is performed by the fusicoccadiene synthase PaFS that possesses both prenyl transferase and terpene cyclase activity, converting isopentenyl diphosphate and dimethylallyl diphosphate into geranylgeranyl diphosphate (GGDP) and successively converting GGDP into fusicocca-2,10(14)-diene, a precursor for fusicoccin H. The second step is the oxidation at the C-8 position by the cytochrome P450 monooxygenase PaP450-2 to yield fusicocca-2,10(14)-diene-8-beta-ol. The cytochrome P450 monooxygenase PaP450-1 then catalyzes the hydroxylation at the C-16 position to produce fusicocca-2,10(14)-diene-8-beta,16-diol. The dioxygenase fc-dox then catalyzes the 16-oxydation of fusicocca-2,10(14)-diene-8-beta,16-diol to yield an aldehyde (8-beta-hydroxyfusicocca-1,10(14)-dien-16-al). The short-chain dehydrogenase/reductase fc-sdr catalyzes the reduction of the aldehyde to yield fusicocca-1,10(14)-diene-8-beta,16-diol. The next step is the hydroxylation at C-9 performed by the cytochrome P450 monooxygenase PaP450-3 that leads to fusicoccin H aglycon which is glycosylated to fusicoccin H by the O-glycosyltransferase PaGT. Hydroxylation at C-12 by the cytochrome P450 monooxygenase PaP450-4 leads then to the production of fusicoccin Q and is followed by methylation by the O-methyltransferase PaMT to yield fusicoccin P. Fusicoccin P is further converted to fusicoccin J via prenylation by the O-glucose prenyltransferase PaPT. Cytochrome P450 monooxygenase PaP450-5 then performs hydroxylation at C-19 to yield dideacetyl-fusicoccin A which is acetylated to 3'-O-deacetyl-fusicoccin A by the O-acetyltransferase PaAT-2. Finally, a another acetylation by the O-acetyltransferase PaAT-1 yields fusicoccin A. The chain is Fusicoccadiene 8-ol C-16-hydroxylase from Phomopsis amygdali (Fusicoccum amygdali).